The sequence spans 130 residues: Cholecystokinin (130 aa).

An N-terminal signal peptide occupies residues 1–20; the sequence is MYSGICICVFLAVLSASSFG. Residues 21-48 constitute a propeptide that is removed on maturation; the sequence is QQTAGSHNGNPLAAELEQSLTEHHRHVR. Positions 40 to 59 are disordered; sequence LTEHHRHVRAPSSAGPLKPV. Y112 carries the post-translational modification Sulfotyrosine. F118 is modified (phenylalanine amide). A propeptide spanning residues 122–130 is cleaved from the precursor; sequence SAEEYEYSS. A sulfotyrosine mark is found at Y126 and Y128.

It belongs to the gastrin/cholecystokinin family. The precursor is cleaved by proteases to produce a number of active cholecystokinins. In terms of tissue distribution, highly concentrated in the duodenum. Also localized in more distal parts of the small intestine.

It localises to the secreted. Its function is as follows. This peptide hormone induces gall bladder contraction and the release of pancreatic enzymes in the gut. Its function in the brain is not clear. This is Cholecystokinin (CCK) from Struthio camelus (Common ostrich).